The primary structure comprises 151 residues: Probable cGMP 3',5'-cyclic phosphodiesterase subunit delta (151 aa).

The protein belongs to the PDE6D/unc-119 family. As to quaternary structure, interacts with Pde6.

The protein localises to the nucleus. It localises to the cytoplasm. This chain is Probable cGMP 3',5'-cyclic phosphodiesterase subunit delta, found in Drosophila willistoni (Fruit fly).